The chain runs to 570 residues: Peptidyl-prolyl cis-trans isomerase FKBP9 (570 aa).

Positions 1–24 (MALGARGWRRRSLLLLLLWVTGQA) are cleaved as a signal peptide. 4 PPIase FKBP-type domains span residues 54–142 (GDFV…VDIW), 166–254 (SDFV…LDLH), 278–365 (GDFL…IDFH), and 389–477 (GDYL…LELV). 4 N-linked (GlcNAc...) asparagine glycosylation sites follow: Asn-174, Asn-286, Asn-302, and Asn-397. EF-hand domains lie at 488–523 (WNGE…QVAT) and 533–568 (NAEM…AKHD). Residues Asp-501, Asp-503, Asn-505, Glu-507, Glu-512, Asp-546, Asn-548, Asp-550, Lys-552, and Glu-557 each contribute to the Ca(2+) site. A Prevents secretion from ER motif is present at residues 567 to 570 (HDEL).

Phosphorylated. Predominantly expressed in heart, skeletal muscle, lung, liver and kidney. Lower levels found in brain, spleen and testis.

Its subcellular location is the endoplasmic reticulum lumen. It carries out the reaction [protein]-peptidylproline (omega=180) = [protein]-peptidylproline (omega=0). Its activity is regulated as follows. Inhibited by FK506. Functionally, PPIases accelerate the folding of proteins during protein synthesis. The sequence is that of Peptidyl-prolyl cis-trans isomerase FKBP9 (Fkbp9) from Mus musculus (Mouse).